Consider the following 147-residue polypeptide: Ribosome maturation factor RimP (147 aa).

It belongs to the RimP family.

It is found in the cytoplasm. Functionally, required for maturation of 30S ribosomal subunits. The polypeptide is Ribosome maturation factor RimP (Sulfurihydrogenibium azorense (strain DSM 15241 / OCM 825 / Az-Fu1)).